The following is a 335-amino-acid chain: Foldase protein PrsA (335 aa).

The first 22 residues, 1–22, serve as a signal peptide directing secretion; that stretch reads MRSAKKLLSVLCLGVFILTFTA. C23 carries the N-palmitoyl cysteine lipid modification. Residue C23 is the site of S-diacylglycerol cysteine attachment. Residues 194–285 enclose the PpiC domain; that stretch reads PNTMNVSHIL…FGYHIIKINS (92 aa).

The protein belongs to the PrsA family.

The protein localises to the cell membrane. It carries out the reaction [protein]-peptidylproline (omega=180) = [protein]-peptidylproline (omega=0). Functionally, plays a major role in protein secretion by helping the post-translocational extracellular folding of several secreted proteins. This chain is Foldase protein PrsA, found in Clostridium botulinum (strain Loch Maree / Type A3).